A 308-amino-acid polypeptide reads, in one-letter code: MGEIKVSPDYNWFRGTVPLKKIIVDDDDSKIWSLYDAGPRSIRCPLIFLPPVSGTADVFFRQILALTGWGYRVIALQYPVYWDHLEFCDGFRKLLDHLQLDKVHLFGASLGGFLAQKFAEYTHKSPRVHSLILCNSFSDTSIFNQTWTANSFWLMPAFMLKKIVLGNFSSGPVDPMMADAIDFMVDRLESLGQSELASRLTLNCQNSYVEPHKIRDIPVTIMDVFDQSALSTEAKEEMYKLYPNARRAHLKTGGNFPYLCRSAEVNLYVQIHLLQFHGTKYAAIDPSMVSAEELEVQKGSLGISQEEQ.

The AB hydrolase-1 domain maps to 87-159; sequence FCDGFRKLLD…NSFWLMPAFM (73 aa). Residue Ser304 is modified to Phosphoserine.

This sequence belongs to the AB hydrolase superfamily. As to quaternary structure, interacts with CD4. Interacts with ALDH16A1. As to expression, expressed in all tissues tested, including heart, brain, placenta, lung, liver, skeletal muscle, kidney and pancreas. Expressed in J.CaM1.6, HuT 78 and HeLa cell lines (at protein level).

It is found in the cytoplasm. The protein localises to the cytosol. Its subcellular location is the membrane. The protein resides in the endosome membrane. It localises to the golgi apparatus. It is found in the trans-Golgi network membrane. Its function is as follows. May play a role as a negative regulatory factor in CD4-dependent T-cell activation. This chain is Maspardin (SPG21), found in Homo sapiens (Human).